Reading from the N-terminus, the 366-residue chain is Glutathione S-transferase omega-like 3 (366 aa).

Cys-46 is a catalytic residue. Residues 197-349 (PRSLEAQITE…LGYTRSQPRV (153 aa)) enclose the GST C-terminal domain.

It belongs to the GST superfamily. Omega family.

The protein resides in the cytoplasm. It catalyses the reaction RX + glutathione = an S-substituted glutathione + a halide anion + H(+). In terms of biological role, active as '1-Cys' thiol transferase against beta-hydroxyethyl disulfide (HED), as dehydroascorbate reductase and as dimethylarsinic acid reductase, while not active against the standard GST substrate 1-chloro-2,4-dinitrobenzene (CDNB). The protein is Glutathione S-transferase omega-like 3 (GTO3) of Saccharomyces cerevisiae (strain ATCC 204508 / S288c) (Baker's yeast).